We begin with the raw amino-acid sequence, 90 residues long: U7-theraphotoxin-Hhn1h (90 aa).

Residues 1–19 form the signal peptide; that stretch reads MKTAIFTVVLALAVFAVLS. Residues 20 to 50 constitute a propeptide that is removed on maturation; the sequence is FGWEANEKALSEEFTELIHEKEAASETEARE. Disulfide bonds link Cys-51/Cys-65, Cys-58/Cys-70, and Cys-64/Cys-81.

This sequence belongs to the neurotoxin 10 (Hwtx-1) family. 13 (Hntx-13) subfamily. In terms of tissue distribution, expressed by the venom gland.

Its subcellular location is the secreted. Ion channel inhibitor. This Cyriopagopus hainanus (Chinese bird spider) protein is U7-theraphotoxin-Hhn1h.